We begin with the raw amino-acid sequence, 199 residues long: Pyridoxine/pyridoxamine 5'-phosphate oxidase (199 aa).

FMN-binding positions include 44-49, 59-60, lysine 66, and glutamine 91; these read RTVLLK and YT. Lysine 49 serves as a coordination point for substrate. Substrate contacts are provided by tyrosine 109, arginine 113, and serine 117. FMN contacts are provided by residues 126–127 and tryptophan 171; that span reads QS. 177–179 is a binding site for substrate; the sequence is RLH. Arginine 181 contacts FMN.

It belongs to the pyridoxamine 5'-phosphate oxidase family. Homodimer. Requires FMN as cofactor.

The catalysed reaction is pyridoxamine 5'-phosphate + O2 + H2O = pyridoxal 5'-phosphate + H2O2 + NH4(+). The enzyme catalyses pyridoxine 5'-phosphate + O2 = pyridoxal 5'-phosphate + H2O2. It participates in cofactor metabolism; pyridoxal 5'-phosphate salvage; pyridoxal 5'-phosphate from pyridoxamine 5'-phosphate: step 1/1. The protein operates within cofactor metabolism; pyridoxal 5'-phosphate salvage; pyridoxal 5'-phosphate from pyridoxine 5'-phosphate: step 1/1. Its function is as follows. Catalyzes the oxidation of either pyridoxine 5'-phosphate (PNP) or pyridoxamine 5'-phosphate (PMP) into pyridoxal 5'-phosphate (PLP). The sequence is that of Pyridoxine/pyridoxamine 5'-phosphate oxidase from Xanthomonas euvesicatoria pv. vesicatoria (strain 85-10) (Xanthomonas campestris pv. vesicatoria).